The chain runs to 436 residues: Transcriptional regulator STP3 (436 aa).

The disordered stretch occupies residues 204 to 277 (EPLDDEFVPP…TKRKYTKKKQ (74 aa)). Residues 230–265 (ISPPASSDSSSSSSYVPQLIPSSSSSVTSNGDSPVS) show a composition bias toward low complexity. Positions 268–277 (TKRKYTKKKQ) are enriched in basic residues. Residues 315–337 (FDCPSCDASFKVKGYLTRHLKKH) form a C2H2-type zinc finger.

Activated by the amino acid-induced proteolytic removal of an N-terminal inhibitory domain.

The protein resides in the cell membrane. The protein localises to the nucleus. In terms of biological role, transcription factor that activates genes required for degradation of extracellular protein and uptake of peptides such as the secreted aspartyl protease SAP2 or the oligopeptide transporter OPT1. Required for virulence. Synthesized as latent cytoplasmic precursor, which, upon a signal initiated by the plasma membrane SPS amino acid sensor system (including CSY1 and CSH3), becomes proteolytically activated and relocates to the nucleus, where it induces the expression of SPS-sensor-regulated genes. This chain is Transcriptional regulator STP3 (STP3), found in Candida albicans (strain SC5314 / ATCC MYA-2876) (Yeast).